Reading from the N-terminus, the 67-residue chain is Protein DsrB (67 aa).

The protein belongs to the DsrB family.

This Pectobacterium carotovorum subsp. carotovorum (strain PC1) protein is Protein DsrB.